A 186-amino-acid polypeptide reads, in one-letter code: 2-oxoglutarate synthase subunit KorC (186 aa).

As to quaternary structure, heterotetramer of the KorA, KorB, KorC and KorD subunits.

It carries out the reaction 2 oxidized [2Fe-2S]-[ferredoxin] + 2-oxoglutarate + CoA = succinyl-CoA + 2 reduced [2Fe-2S]-[ferredoxin] + CO2 + H(+). In Methanothermobacter marburgensis (strain ATCC BAA-927 / DSM 2133 / JCM 14651 / NBRC 100331 / OCM 82 / Marburg) (Methanobacterium thermoautotrophicum), this protein is 2-oxoglutarate synthase subunit KorC (korC).